The sequence spans 66 residues: Nigrocin-2ISb (66 aa).

A signal peptide spans 1-22 (MFTLKKSMLLLFFLGTINLSLC). The propeptide at 23–43 (QEERDAEEERRDEDNAKMEEI) is removed in mature form. A disulfide bridge links Cys-60 with Cys-66.

As to expression, expressed by the skin glands.

The protein resides in the secreted. In terms of biological role, has antimicrobial activity against Gram-negative bacterium E.coli ATCC 8739 (MIC=50 ug), against Gram positive bacteria S.aureus ATCC 6538 (MIC=3.1 ug), methicillin-resistant S.aureus ATCC 43300 (MIC=12.5 ug), B.subtilis ATCC 6633 (MIC=12.5 ug) and against fungus C.albicans ATCC 90028 (MIC=50 ug). The polypeptide is Nigrocin-2ISb (Odorrana ishikawae (Ishikawa's frog)).